Consider the following 921-residue polypeptide: Ribosome-releasing factor 2, mitochondrial (921 aa).

The N-terminal 55 residues, 1-55 (MVSALLLRARQNGRAARCLDYPKVKCWALASLPKSSLEKPGFSQVRRFSVFHPQS), are a transit peptide targeting the mitochondrion. Positions 60–368 (DLTRNIGIIA…SVVDLLPSPQ (309 aa)) constitute a tr-type G domain. Residues 69-76 (AHIDAGKT), 152-156 (DTPGH), and 206-209 (NKMD) each bind GTP.

The protein belongs to the TRAFAC class translation factor GTPase superfamily. Classic translation factor GTPase family. EF-G/EF-2 subfamily.

It is found in the mitochondrion. Functionally, mitochondrial GTPase that mediates the disassembly of ribosomes from messenger RNA at the termination of mitochondrial protein biosynthesis. Not involved in the GTP-dependent ribosomal translocation step during translation elongation. This is Ribosome-releasing factor 2, mitochondrial (mef2) from Emericella nidulans (strain FGSC A4 / ATCC 38163 / CBS 112.46 / NRRL 194 / M139) (Aspergillus nidulans).